Reading from the N-terminus, the 179-residue chain is tRNA (cytidine(56)-2'-O)-methyltransferase (179 aa).

S-adenosyl-L-methionine is bound by residues Leu-82, 112–116 (GAEKV), and 130–137 (VGNQPHSE).

This sequence belongs to the aTrm56 family. Homodimer.

Its subcellular location is the cytoplasm. The enzyme catalyses cytidine(56) in tRNA + S-adenosyl-L-methionine = 2'-O-methylcytidine(56) in tRNA + S-adenosyl-L-homocysteine + H(+). In terms of biological role, specifically catalyzes the AdoMet-dependent 2'-O-ribose methylation of cytidine at position 56 in tRNAs. In Methanococcus maripaludis (strain C5 / ATCC BAA-1333), this protein is tRNA (cytidine(56)-2'-O)-methyltransferase.